The sequence spans 203 residues: uncharacterized protein (203 aa).

Positions 1-23 (MKKIYKALISSLLLSTSINVAYA) are cleaved as a signal peptide. Positions 24–87 (ETQYVTENLS…ILNSDLSSTP (64 aa)) constitute an SH3b domain. Residues 167-189 (IAIQWFIYGGSVLGVGLLFGLLI) form a helical membrane-spanning segment.

The protein to E.coli YgiM.

It is found in the membrane. This is an uncharacterized protein from Haemophilus influenzae (strain ATCC 51907 / DSM 11121 / KW20 / Rd).